Reading from the N-terminus, the 902-residue chain is Nuclear factor of activated T-cells, cytoplasmic 4 (902 aa).

Disordered stretches follow at residues 16–180 (VFGE…SSWS) and 208–369 (RFGL…GGSR). Residues 50-81 (EPPPYGAAPIGIPRPPPPRPGMHSPPPRPAPS) show a composition bias toward pro residues. Gly residues predominate over residues 96–109 (GGPGGGAGGAGGGR). Residues 114 to 119 (PSIRIT) are calcineurin-binding. The span at 151–165 (GFGGYREAGGQGGGA) shows a compositional bias: gly residues. Residues 166–180 (FFSPSPGSSSLSSWS) show a composition bias toward low complexity. Ser-168 and Ser-170 each carry phosphoserine; by MAPK7 and MAPK14. Phosphoserine; by MAPK8 and MAPK9 occurs at positions 213 and 217. An SP 1 repeat occupies 213-229 (SPLPSPRASPRPWTPED). Residues 213–293 (SPLPSPRASP…LSRRGSLGEE (81 aa)) form a 2 approximate SP repeats region. Composition is skewed to pro residues over residues 215-227 (LPSPRASPRPWTP) and 254-263 (GPTPASPRPA). The Nuclear localization signal signature appears at 268-270 (KRR). Residues 272-288 (SSSGTPSSASPALSRRG) are compositionally biased toward low complexity. The stretch at 277–293 (PSSASPALSRRGSLGEE) is one SP 2; approximate repeat. Phosphoserine; by RPS6KA3 is present on residues Ser-289 and Ser-344. An RHD domain is found at 401-582 (SALPPLDWPL…VPIECSQRSA (182 aa)). The DNA-binding element occupies 430 to 437 (RAHYETEG). Residues 586–683 (PQVEAYSPSA…KRSPTQSFRF (98 aa)) form the IPT/TIG domain. The short motif at 672–674 (RRK) is the Nuclear localization signal element. A Glycyl lysine isopeptide (Lys-Gly) (interchain with G-Cter in SUMO2) cross-link involves residue Lys-689. The interval 791–870 (PYGGRGSSFS…GGYSSGFRDS (80 aa)) is disordered. The segment covering 805–824 (FSPPAPFRPPPLPASPPLEG) has biased composition (pro residues).

In terms of assembly, member of the multicomponent NFATC transcription complex that consists of at least two components, a pre-existing cytoplasmic component NFATC2 and an inducible nuclear component NFATC1. Other NFAT proteins, such as NFATC3, or members of the activating protein-1 (AP-1) family and MAF can also bind the complex. NFAT proteins can bind DNA as monomers or dimers. Component of a promoter-binding complex composed of STAT3, NFATC3 and NFATC4; complex formation is enhanced by calcineurin. Interacts with CREBBP; this interaction potentiates transcription activation. Interacts with MAPK8/JNK1 and MAPK9/JNK2. Interacts with GATA4 (via the second Zn finger). Interacts (via N-terminus) with IRAK1 (via C-terminus). Interacts with RPS6KA3. Interacts with HOMER1, HOMER2 and HOMER3; this interaction competes with calcineurin/PPP3CA-binding and hence prevents NFATC4 dephosphorylation and activation. Interacts with ESR1 and ESR2; this interaction decreases NFATC4 transcriptional activity. Interacts with MTOR and MAPK7/ERK5. Interacts with TRIM17; this interaction prevents NFATC3 nuclear localization. Interacts with TCF25 (via C-terminus); the interaction leads to suppression of NFATC4 transcription factor activity and is reduced following stimulation with angiotensin-2. Post-translationally, phosphorylated by NFATC-kinases; dephosphorylated by calcineurin/PPP3CA. Phosphorylated on Ser-168 and Ser-170 by MTOR, IRAK1, MAPK7/ERK5 and MAPK14/p38, on Ser-213 and Ser-217 by MAPK8/JNK1 and MAPK9/JNK2, and on Ser-289 and Ser-344 by RPS6KA3. Phosphorylated by GSK3B. Phosphorylation by GSK3B markedly increases NFATC4 ubiquitination. Phosphorylation at Ser-168 and Ser-170 is stimulated by UV irradiation. Phosphorylation determines subcellular location: the hyperphosphorylated protein is cytosolic, while the dephosphorylated form is targeted to the nucleus. Ubiquitinated, leading to degradation by the proteasome. Ubiquitination may be stimulated by GSK3B-dependent phosphorylation. Polyubiquitin linkage mainly occurs through 'Lys-48'. In terms of tissue distribution, widely expressed, with high levels in placenta, lung, kidney, testis and ovary. Weakly expressed in spleen and thymus. In the hippocampus, expressed in the granular layer of the dentate gyrus, in the pyramidal neurons of CA3 region, and in the hippocampal fissure. Expressed in the heart (at protein level).

The protein resides in the cytoplasm. It is found in the nucleus. With respect to regulation, transcriptional activity may be repressed by ESR1 and ESR2. Its function is as follows. Ca(2+)-regulated transcription factor that is involved in several processes, including the development and function of the immune, cardiovascular, musculoskeletal, and nervous systems. Involved in T-cell activation, stimulating the transcription of cytokine genes, including that of IL2 and IL4. Along with NFATC3, involved in embryonic heart development. Following JAK/STAT signaling activation and as part of a complex with NFATC3 and STAT3, binds to the alpha-beta E4 promoter region of CRYAB and activates transcription in cardiomyocytes. Involved in mitochondrial energy metabolism required for cardiac morphogenesis and function. Transactivates many genes involved in the cardiovascular system, including AGTR2, NPPB/BNP (in synergy with GATA4), NPPA/ANP/ANF and MYH7/beta-MHC. Involved in the regulation of adult hippocampal neurogenesis. Involved in BDNF-driven pro-survival signaling in hippocampal adult-born neurons. Involved in the formation of long-term spatial memory and long-term potentiation. In cochlear nucleus neurons, may play a role in deafferentation-induced apoptosis during the developmental critical period, when auditory neurons depend on afferent input for survival. Binds to and activates the BACE1/Beta-secretase 1 promoter, hence may regulate the proteolytic processing of the amyloid precursor protein (APP). Plays a role in adipocyte differentiation. May be involved in myoblast differentiation into myotubes. Binds the consensus DNA sequence 5'-GGAAAAT-3'. In the presence of CREBBP, activates TNF transcription. Binds to PPARG gene promoter and regulates its activity. Binds to PPARG and REG3G gene promoters. The chain is Nuclear factor of activated T-cells, cytoplasmic 4 (NFATC4) from Homo sapiens (Human).